Reading from the N-terminus, the 151-residue chain is Tetratricopeptide repeat protein 32 (151 aa).

3 TPR repeats span residues S8 to A41, A58 to F91, and E92 to F125.

The protein is Tetratricopeptide repeat protein 32 (TTC32) of Homo sapiens (Human).